Reading from the N-terminus, the 89-residue chain is Small ribosomal subunit protein uS15 (89 aa).

The protein belongs to the universal ribosomal protein uS15 family. Part of the 30S ribosomal subunit. Forms a bridge to the 50S subunit in the 70S ribosome, contacting the 23S rRNA.

In terms of biological role, one of the primary rRNA binding proteins, it binds directly to 16S rRNA where it helps nucleate assembly of the platform of the 30S subunit by binding and bridging several RNA helices of the 16S rRNA. Its function is as follows. Forms an intersubunit bridge (bridge B4) with the 23S rRNA of the 50S subunit in the ribosome. This chain is Small ribosomal subunit protein uS15, found in Anaeromyxobacter dehalogenans (strain 2CP-1 / ATCC BAA-258).